A 286-amino-acid chain; its full sequence is 4-hydroxy-tetrahydrodipicolinate synthase (286 aa).

Pyruvate is bound at residue Thr-42. Catalysis depends on Tyr-129, which acts as the Proton donor/acceptor. The Schiff-base intermediate with substrate role is filled by Lys-157. Ile-196 contacts pyruvate.

This sequence belongs to the DapA family. In terms of assembly, homotetramer; dimer of dimers.

Its subcellular location is the cytoplasm. The enzyme catalyses L-aspartate 4-semialdehyde + pyruvate = (2S,4S)-4-hydroxy-2,3,4,5-tetrahydrodipicolinate + H2O + H(+). Its pathway is amino-acid biosynthesis; L-lysine biosynthesis via DAP pathway; (S)-tetrahydrodipicolinate from L-aspartate: step 3/4. Functionally, catalyzes the condensation of (S)-aspartate-beta-semialdehyde [(S)-ASA] and pyruvate to 4-hydroxy-tetrahydrodipicolinate (HTPA). In Chlamydia trachomatis serovar A (strain ATCC VR-571B / DSM 19440 / HAR-13), this protein is 4-hydroxy-tetrahydrodipicolinate synthase.